Reading from the N-terminus, the 442-residue chain is F-box/kelch-repeat protein OR23 (442 aa).

The region spanning 37–84 is the F-box domain; that stretch reads TLIPGLSNDVGRLILSFVPYPHISRIKSTCKSWYAFLSSKTLISLRHS. Kelch repeat units follow at residues 93-139, 145-200, 204-257, 269-328, 330-377, and 390-437; these read LSHL…NFVA, YVYV…AMPG, RIIV…LVEN, EFWV…KIVA, DCGK…ALNG, and LMDT…TTVM.

The polypeptide is F-box/kelch-repeat protein OR23 (OR23) (Arabidopsis thaliana (Mouse-ear cress)).